The sequence spans 51 residues: MAPPQHLCGSHLVDALYLVCGDRGFFYNPKGIVEQCCHRPCDIFDLQSYCN.

Cystine bridges form between Cys-8–Cys-37, Cys-20–Cys-50, and Cys-36–Cys-41.

This sequence belongs to the insulin family. As to quaternary structure, heterodimer of a B chain and an A chain linked by two disulfide bonds.

It is found in the secreted. Its function is as follows. Insulin decreases blood glucose concentration. It increases cell permeability to monosaccharides, amino acids and fatty acids. It accelerates glycolysis, the pentose phosphate cycle, and glycogen synthesis in liver. This chain is Insulin-1 (ins1), found in Batrachoididae sp. (Toadfish).